A 454-amino-acid chain; its full sequence is Flagellum-specific ATP synthase (454 aa).

Residue 182-189 (ASSGLGKS) coordinates ATP.

This sequence belongs to the ATPase alpha/beta chains family.

It is found in the cytoplasm. It catalyses the reaction ATP + H2O + 4 H(+)(in) = ADP + phosphate + 5 H(+)(out). Functionally, probable catalytic subunit of a protein translocase for flagellum-specific export, or a proton translocase involved in local circuits at the flagellum. May be involved in a specialized protein export pathway that proceeds without signal peptide cleavage. This is Flagellum-specific ATP synthase (fliI) from Buchnera aphidicola subsp. Baizongia pistaciae (strain Bp).